Consider the following 375-residue polypeptide: Serpin B5 (375 aa).

5 N-linked (GlcNAc...) asparagine glycosylation sites follow: Asn-99, Asn-133, Asn-155, Asn-188, and Asn-361.

It belongs to the serpin family. Ov-serpin subfamily. Interacts with IRF6.

It localises to the secreted. The protein resides in the extracellular space. In terms of biological role, tumor suppressor. It blocks the growth, invasion, and metastatic properties of mammary tumors. As it does not undergo the S (stressed) to R (relaxed) conformational transition characteristic of active serpins, it exhibits no serine protease inhibitory activity. The chain is Serpin B5 (SERPINB5) from Plecturocebus moloch (Dusky titi monkey).